The primary structure comprises 611 residues: Methionine--tRNA ligase (611 aa).

The 'HIGH' region signature appears at 12–22; it reads PYANGPRHIGH. Zn(2+)-binding residues include C144, C147, C157, and C160. The 'KMSKS' region motif lies at 348 to 352; it reads KFSSS. S351 is a binding site for ATP.

It belongs to the class-I aminoacyl-tRNA synthetase family. MetG type 1 subfamily. In terms of assembly, monomer. The cofactor is Zn(2+).

The protein resides in the cytoplasm. It catalyses the reaction tRNA(Met) + L-methionine + ATP = L-methionyl-tRNA(Met) + AMP + diphosphate. In terms of biological role, is required not only for elongation of protein synthesis but also for the initiation of all mRNA translation through initiator tRNA(fMet) aminoacylation. The chain is Methionine--tRNA ligase from Corynebacterium urealyticum (strain ATCC 43042 / DSM 7109).